The sequence spans 92 residues: Small ribosomal subunit protein uS19 (92 aa).

Belongs to the universal ribosomal protein uS19 family.

Functionally, protein S19 forms a complex with S13 that binds strongly to the 16S ribosomal RNA. This chain is Small ribosomal subunit protein uS19, found in Azorhizobium caulinodans (strain ATCC 43989 / DSM 5975 / JCM 20966 / LMG 6465 / NBRC 14845 / NCIMB 13405 / ORS 571).